Here is a 62-residue protein sequence, read N- to C-terminus: DNA-directed RNA polymerase subunit Rpo10 (62 aa).

Positions 6, 9, 43, and 44 each coordinate Zn(2+).

The protein belongs to the archaeal Rpo10/eukaryotic RPB10 RNA polymerase subunit family. Part of the RNA polymerase complex. Zn(2+) serves as cofactor.

It localises to the cytoplasm. It catalyses the reaction RNA(n) + a ribonucleoside 5'-triphosphate = RNA(n+1) + diphosphate. In terms of biological role, DNA-dependent RNA polymerase (RNAP) catalyzes the transcription of DNA into RNA using the four ribonucleoside triphosphates as substrates. The polypeptide is DNA-directed RNA polymerase subunit Rpo10 (Methanoculleus marisnigri (strain ATCC 35101 / DSM 1498 / JR1)).